A 155-amino-acid chain; its full sequence is Small ribosomal subunit protein uS7 (155 aa).

It belongs to the universal ribosomal protein uS7 family. Part of the 30S ribosomal subunit. Contacts proteins S9 and S11.

In terms of biological role, one of the primary rRNA binding proteins, it binds directly to 16S rRNA where it nucleates assembly of the head domain of the 30S subunit. Is located at the subunit interface close to the decoding center, probably blocks exit of the E-site tRNA. The chain is Small ribosomal subunit protein uS7 from Thermotoga neapolitana (strain ATCC 49049 / DSM 4359 / NBRC 107923 / NS-E).